The sequence spans 342 residues: Ferredoxin--NADP reductase (342 aa).

FAD is bound by residues C17, D36, Q44, Y49, I89, F124, D289, and T330.

The protein belongs to the ferredoxin--NADP reductase type 2 family. Homodimer. FAD is required as a cofactor.

The enzyme catalyses 2 reduced [2Fe-2S]-[ferredoxin] + NADP(+) + H(+) = 2 oxidized [2Fe-2S]-[ferredoxin] + NADPH. The polypeptide is Ferredoxin--NADP reductase (Rhodopseudomonas palustris (strain HaA2)).